We begin with the raw amino-acid sequence, 366 residues long: Ribonuclease P protein subunit drpp30 (366 aa).

Residues 265–366 (EDTQPTNNNI…DIDNNKRKRE (102 aa)) form a disordered region. Over residues 275 to 290 (PHEKHINKESTGKETI) the composition is skewed to basic and acidic residues. Composition is skewed to low complexity over residues 291–324 (PKPT…TPSI) and 333–351 (TAKS…AQKQ). Residues 352 to 366 (GKMDIDIDNNKRKRE) are compositionally biased toward basic and acidic residues.

The protein belongs to the eukaryotic/archaeal RNase P protein component 3 family.

The protein localises to the nucleus. It carries out the reaction Endonucleolytic cleavage of RNA, removing 5'-extranucleotides from tRNA precursor.. In terms of biological role, component of ribonuclease P, a protein complex that generates mature tRNA molecules by cleaving their 5'-ends. The chain is Ribonuclease P protein subunit drpp30 (drpp30) from Dictyostelium discoideum (Social amoeba).